Reading from the N-terminus, the 589-residue chain is Complement component C8 beta chain (589 aa).

The N-terminal stretch at 1–31 is a signal peptide; that stretch reads MKIGAQVWRALAKSCLLCATLGCLHFPGSRG. The propeptide occupies 32 to 53; it reads GKPDFFETKAVNGSLVKSRPVR. A glycan (N-linked (GlcNAc...) asparagine) is linked at asparagine 43. The TSP type-1 1 domain maps to 63–116; the sequence is DCELSTWSSWTACDPCQKKRYRHTYLLRPSQFYGELCDLSDKEVEDCVTNQPCR. 7 disulfides stabilise this stretch: cysteine 64–cysteine 99, cysteine 75–cysteine 109, cysteine 78–cysteine 115, cysteine 121–cysteine 132, cysteine 126–cysteine 145, cysteine 139–cysteine 154, and cysteine 161–cysteine 199. C-linked (Man) tryptophan glycosylation is found at tryptophan 69 and tryptophan 72. Positions 120–155 constitute an LDL-receptor class A domain; the sequence is RCEGFVCAQTGRCVNRRLLCNGDNDCGDQSDEANCR. Residues leucine 137, asparagine 140, aspartate 142, aspartate 144, aspartate 150, and glutamate 151 each coordinate Ca(2+). Residues 157-503 enclose the MACPF domain; that stretch reads IYKNCQREME…EFQSEVSSCR (347 aa). Transmembrane regions (beta stranded) follow at residues 201–206, 209–213, 251–258, 261–268, 328–335, 338–343, 378–385, and 391–398; these read PHYILD, FRKPY, FNFTSGFK, GVMDLGIK, SYGEYRDL, DFGTHF, AGGSFGIG, and VYVKVGVS. A disulfide bridge links cysteine 377 with cysteine 402. The 131-residue stretch at 404–534 folds into the EGF-like domain; that stretch reads DIMKEINERN…PGGFQGTACE (131 aa). Threonine 417 bears the Phosphothreonine mark. 4 disulfide bridges follow: cysteine 502–cysteine 549, cysteine 504–cysteine 520, cysteine 507–cysteine 522, and cysteine 524–cysteine 533. The 44-residue stretch at 544–587 folds into the TSP type-1 2 domain; that stretch reads DGKWSCWSDWSACSGGHKTRHRQCNNPAPHKGGSPCSGPASETL. Tryptophan 550 and tryptophan 553 each carry a C-linked (Man) tryptophan glycan. Cysteine 556 and cysteine 589 are oxidised to a cystine. Positions 570-589 are disordered; sequence PAPHKGGSPCSGPASETLNC.

This sequence belongs to the complement C6/C7/C8/C9 family. In terms of assembly, heterotrimer of 3 chains: alpha (C8A), beta (C8B) and gamma (C8G); the alpha and gamma chains are disulfide bonded. Component of the membrane attack complex (MAC), composed of complement C5b, C6, C7, C8A, C8B, C8G and multiple copies of the pore-forming subunit C9. In terms of processing, N-glycosylated; contains one or two bound glycans. Not O-glycosylated.

The protein localises to the secreted. Its subcellular location is the target cell membrane. Its activity is regulated as follows. Membrane attack complex (MAC) assembly is inhibited by CD59, thereby protecting self-cells from damage during complement activation. CD59 acts by binding to the beta-haipins of C8 (C8A and C8B), forming an intermolecular beta-sheet that prevents incorporation of the multiple copies of C9 required for complete formation of the osmolytic pore. MAC assembly is also inhibited by clusterin (CLU) chaperones that inhibit polymerization of C9. Component of the membrane attack complex (MAC), a multiprotein complex activated by the complement cascade, which inserts into a target cell membrane and forms a pore, leading to target cell membrane rupture and cell lysis. The MAC is initiated by proteolytic cleavage of C5 into complement C5b in response to the classical, alternative, lectin and GZMK complement pathways. The complement pathways consist in a cascade of proteins that leads to phagocytosis and breakdown of pathogens and signaling that strengthens the adaptive immune system. C8B, together with C8A and C8G, inserts into the target membrane, but does not form pores by itself. During MAC assembly, associates with C5b, C6 and C7 to form the C5b8 intermediate complex that inserts into the target membrane and traverses the bilayer increasing membrane rigidity. In Mus musculus (Mouse), this protein is Complement component C8 beta chain (C8b).